A 134-amino-acid chain; its full sequence is ATP synthase epsilon chain (134 aa).

It belongs to the ATPase epsilon chain family. F-type ATPases have 2 components, CF(1) - the catalytic core - and CF(0) - the membrane proton channel. CF(1) has five subunits: alpha(3), beta(3), gamma(1), delta(1), epsilon(1). CF(0) has three main subunits: a, b and c.

The protein localises to the cell membrane. Its function is as follows. Produces ATP from ADP in the presence of a proton gradient across the membrane. The sequence is that of ATP synthase epsilon chain from Ruminiclostridium cellulolyticum (strain ATCC 35319 / DSM 5812 / JCM 6584 / H10) (Clostridium cellulolyticum).